Here is a 194-residue protein sequence, read N- to C-terminus: CD-NTase-associated protein 15 (194 aa).

The interval Met1–Asp73 is required for cell toxicity. The next 2 membrane-spanning stretches (helical) occupy residues Ile15–Val35 and Ile43–Ile63.

It belongs to the CBASS Cap15 membrane effector family. In terms of assembly, the beta barrel domain oligomerizes; in the presence of cyclic nucleotides (probably 3',3'-cGAMP, but the cognate CD-NTase makes at least 4 other cyclic nucleotides) higher-level oligomers are detected.

The protein localises to the cell inner membrane. In terms of biological role, effector protein of a CBASS antivirus system. CBASS (cyclic oligonucleotide-based antiphage signaling system) provides immunity against bacteriophages. The CD-NTase protein (CdnB) synthesizes cyclic nucleotides in response to infection; these serve as specific second messenger signals. The signals activate a diverse range of effectors, leading to bacterial cell death and thus abortive phage infection. Causes cell death in response to 3',3'-cGAMP upon coexpression in E.coli with V.cholerae DncV; inactivating DncV prevents cell death. Upon induction in E.coli with non-cognate DncV, the cell inner membrane shrinks and separates from the cell wall with a concomitant increase in the periplasm. Binds cyclic nucleotide second messenger 3',3'-cGAMP, probably oligomerizing, and induces cell membrane shrinkage and rupture, leading to cell death. A type I CBASS system. Protects E.coli against phage infection. When the CBASS operon (cdnB-cap15) is introduced in E.coli MG1655 there is about 100-fold protection against phage T2 and about 10-fold protection against phage T5 and T6. The polypeptide is CD-NTase-associated protein 15 (Escherichia albertii).